Here is a 166-residue protein sequence, read N- to C-terminus: uncharacterized protein (166 aa).

Pentapeptide repeat domains follow at residues 38-77 (GECLDCNLAGADLREFNLENARLNRSDLSGANLSGVNLRR), 78-117 (ALLDRANLTGANLSETDLTEAALTEANLAGADLSGANLER), and 118-157 (SFLRDVDLTGANLKGANLAWANLTAANLTDVDLEEAEFWE).

This is an uncharacterized protein from Synechocystis sp. (strain ATCC 27184 / PCC 6803 / Kazusa).